A 423-amino-acid chain; its full sequence is Glutamyl-tRNA reductase (423 aa).

Substrate contacts are provided by residues 49-52, serine 106, 111-113, and glutamine 117; these read TCNR and EPQ. Cysteine 50 serves as the catalytic Nucleophile. Position 186 to 191 (186 to 191) interacts with NADP(+); the sequence is GAGDTS.

The protein belongs to the glutamyl-tRNA reductase family. In terms of assembly, homodimer.

The enzyme catalyses (S)-4-amino-5-oxopentanoate + tRNA(Glu) + NADP(+) = L-glutamyl-tRNA(Glu) + NADPH + H(+). It participates in porphyrin-containing compound metabolism; protoporphyrin-IX biosynthesis; 5-aminolevulinate from L-glutamyl-tRNA(Glu): step 1/2. Catalyzes the NADPH-dependent reduction of glutamyl-tRNA(Glu) to glutamate 1-semialdehyde (GSA). This chain is Glutamyl-tRNA reductase, found in Idiomarina loihiensis (strain ATCC BAA-735 / DSM 15497 / L2-TR).